Here is a 145-residue protein sequence, read N- to C-terminus: 3-dehydroquinate dehydratase (145 aa).

Tyr-24 serves as the catalytic Proton acceptor. Substrate is bound by residues Asn-75, His-81, and Asp-88. Residue His-101 is the Proton donor of the active site. Residues 102 to 103 (LS) and Arg-112 contribute to the substrate site.

It belongs to the type-II 3-dehydroquinase family. As to quaternary structure, homododecamer.

The enzyme catalyses 3-dehydroquinate = 3-dehydroshikimate + H2O. The protein operates within metabolic intermediate biosynthesis; chorismate biosynthesis; chorismate from D-erythrose 4-phosphate and phosphoenolpyruvate: step 3/7. Catalyzes a trans-dehydration via an enolate intermediate. The chain is 3-dehydroquinate dehydratase from Phenylobacterium zucineum (strain HLK1).